A 246-amino-acid polypeptide reads, in one-letter code: Hsp70 nucleotide exchange factor fes-1 (246 aa).

The span at 23-40 shows a compositional bias: polar residues; sequence QSYHSNGAPTPNNNSGPA. The interval 23-63 is disordered; that stretch reads QSYHSNGAPTPNNNSGPATGTGAVATSPAPQVTGSGPRPVD. 4 ARM repeats span residues 48-92, 113-152, 155-196, and 214-244; these read TSPA…DPSP, LDNA…TAVQ, QKTQ…SAVR, and HEVL…NKAK.

It belongs to the FES1 family.

The protein localises to the cytoplasm. Functionally, functions as a nucleotide exchange factor (NEF) for Hsp70 chaperones which accelerates the release of ADP. Required for fully efficient Hsp70-mediated folding of proteins. This chain is Hsp70 nucleotide exchange factor fes-1 (fes-1), found in Neurospora crassa (strain ATCC 24698 / 74-OR23-1A / CBS 708.71 / DSM 1257 / FGSC 987).